A 121-amino-acid polypeptide reads, in one-letter code: Large ribosomal subunit protein uL14 (121 aa).

This sequence belongs to the universal ribosomal protein uL14 family. Part of the 50S ribosomal subunit. Forms a cluster with proteins L3 and L19. In the 70S ribosome, L14 and L19 interact and together make contacts with the 16S rRNA in bridges B5 and B8.

Its function is as follows. Binds to 23S rRNA. Forms part of two intersubunit bridges in the 70S ribosome. The sequence is that of Large ribosomal subunit protein uL14 from Opitutus terrae (strain DSM 11246 / JCM 15787 / PB90-1).